Here is a 504-residue protein sequence, read N- to C-terminus: Sodium-coupled neutral amino acid transporter 3 (504 aa).

N74 is a glycosylation site (N-linked (GlcNAc...) asparagine). The next 5 membrane-spanning stretches (helical) occupy residues 83–103, 106–126, 144–164, 187–207, and 213–233; these read GILG…LFLL, VALL…VVGI, AAAL…LYII, MNGN…LALM, and LGYS…AVIY. C240 and C275 form a disulfide bridge. 4 N-linked (GlcNAc...) asparagine glycosylation sites follow: N247, N248, N252, and N323. The next 5 helical transmembrane spans lie at 324 to 344, 366 to 386, 408 to 428, 431 to 451, and 471 to 491; these read LSIA…YLTF, ILCV…IVLF, VLIA…APNI, IFGV…PAIF, and ALCF…FIII.

The protein belongs to the amino acid/polyamine transporter 2 family.

The protein resides in the cell membrane. The protein localises to the basolateral cell membrane. It carries out the reaction L-glutamine(out) + Na(+)(out) + H(+)(in) = L-glutamine(in) + Na(+)(in) + H(+)(out). The catalysed reaction is L-asparagine(out) + Na(+)(out) + H(+)(in) = L-asparagine(in) + Na(+)(in) + H(+)(out). It catalyses the reaction L-histidine(out) + Na(+)(out) + H(+)(in) = L-histidine(in) + Na(+)(in) + H(+)(out). Symporter that cotransports specific neutral amino acids and sodium ions, coupled to an H(+) antiporter activity. Mainly participates in the glutamate-GABA-glutamine cycle in brain where it transports L-glutamine from astrocytes in the intercellular space for the replenishment of both neurotransmitters glutamate and gamma-aminobutyric acid (GABA) in neurons and also functions as the major influx transporter in ganglion cells mediating the uptake of glutamine. The transport activity is specific for L-glutamine, L-histidine and L-asparagine. The transport is electroneutral coupled to the cotransport of 1 Na(+) and the antiport of 1 H(+). The transport is pH dependent, saturable, Li(+) tolerant and functions in both direction depending on the concentration gradients of its substrates and cotransported ions. Also mediates an amino acid-gated H(+) conductance that is not stoichiometrically coupled to the amino acid transport but which influences the ionic gradients that drive the amino acid transport. In addition, may play a role in nitrogen metabolism, amino acid homeostasis, glucose metabolism and renal ammoniagenesis. The sequence is that of Sodium-coupled neutral amino acid transporter 3 from Homo sapiens (Human).